The sequence spans 503 residues: tRNA-2-methylthio-N(6)-dimethylallyladenosine synthase (503 aa).

The region spanning 5–121 is the MTTase N-terminal domain; that stretch reads RSYEIRTFGC…LPVLLERARH (117 aa). [4Fe-4S] cluster contacts are provided by C14, C50, C84, C158, C162, and C165. The 237-residue stretch at 144-380 folds into the Radical SAM core domain; that stretch reads RESAYAGWVS…IALQEEISLA (237 aa). The region spanning 383 to 453 is the TRAM domain; it reads RELIGTEVEL…PHHLIADAPV (71 aa).

It belongs to the methylthiotransferase family. MiaB subfamily. In terms of assembly, monomer. Requires [4Fe-4S] cluster as cofactor.

The protein localises to the cytoplasm. It carries out the reaction N(6)-dimethylallyladenosine(37) in tRNA + (sulfur carrier)-SH + AH2 + 2 S-adenosyl-L-methionine = 2-methylsulfanyl-N(6)-dimethylallyladenosine(37) in tRNA + (sulfur carrier)-H + 5'-deoxyadenosine + L-methionine + A + S-adenosyl-L-homocysteine + 2 H(+). In terms of biological role, catalyzes the methylthiolation of N6-(dimethylallyl)adenosine (i(6)A), leading to the formation of 2-methylthio-N6-(dimethylallyl)adenosine (ms(2)i(6)A) at position 37 in tRNAs that read codons beginning with uridine. In Nocardia farcinica (strain IFM 10152), this protein is tRNA-2-methylthio-N(6)-dimethylallyladenosine synthase.